Here is a 473-residue protein sequence, read N- to C-terminus: Cysteine--tRNA ligase (473 aa).

A Zn(2+)-binding site is contributed by C29. The short motif at 31 to 41 is the 'HIGH' region element; that stretch reads PTVYDRAHLGN. Zn(2+)-binding residues include C225, H250, and E254. The 'KMSKS' region motif lies at 281 to 285; it reads KMSKS. K284 serves as a coordination point for ATP.

This sequence belongs to the class-I aminoacyl-tRNA synthetase family. Monomer. Requires Zn(2+) as cofactor.

It localises to the cytoplasm. The enzyme catalyses tRNA(Cys) + L-cysteine + ATP = L-cysteinyl-tRNA(Cys) + AMP + diphosphate. This is Cysteine--tRNA ligase from Roseobacter denitrificans (strain ATCC 33942 / OCh 114) (Erythrobacter sp. (strain OCh 114)).